A 365-amino-acid polypeptide reads, in one-letter code: MLCVLCECRKAMLKRPKTLQPICKPCFYNVFETEIHNTIVESNLFFPGERVAIGASGGKDSTVLAHVMKTLNERYNYGVDFVLLSIDEGIHGYRDDSLETVKRNKVQYDMDLEVVSYSELYGWSMDQIVAQIGNKNNCTYCGVFRRQALDRGSAKLGIAHIVTGHNADDMAETVLMNLLRGDTARLDRCTELVTGSDDSPVKRSKPLKYAYEKEIVLYAHYKKLDYFSTECTYSPEAFRGTARTLIKNLEAIRPSTIIDIIHSGEAFVLKKKKEKKGKGSVVVKAKVEEKPVPSGGCSVPLAFDSSLGLSNRCTKCGYLSHNAVCKACVLLEGLNAGRAKMQIEGDSADGAAKNIKTLEKLALSI.

It belongs to the TtcA family. CTU1/NCS6/ATPBD3 subfamily.

It is found in the cytoplasm. It functions in the pathway tRNA modification; 5-methoxycarbonylmethyl-2-thiouridine-tRNA biosynthesis. In terms of biological role, plays a central role in 2-thiolation of mcm(5)S(2)U at tRNA wobble positions of tRNA(Lys), tRNA(Glu) and tRNA(Gln). Directly binds tRNAs and probably acts by catalyzing adenylation of tRNAs, an intermediate required for 2-thiolation. It is unclear whether it acts as a sulfurtransferase that transfers sulfur from thiocarboxylated URM1 onto the uridine of tRNAs at wobble position. Prior mcm(5) tRNA modification by the elongator complex is required for 2-thiolation. May also be involved in protein urmylation. The polypeptide is Cytoplasmic tRNA 2-thiolation protein 1 (Yarrowia lipolytica (strain CLIB 122 / E 150) (Yeast)).